The sequence spans 297 residues: Averufin oxidase stcO (297 aa).

The helical transmembrane segment at Val-277 to Ala-297 threads the bilayer.

It belongs to the avfA family.

It localises to the membrane. The protein operates within mycotoxin biosynthesis; sterigmatocystin biosynthesis. Averufin oxidase; part of the gene cluster that mediates the biosynthesis of sterigmatocystin (ST), a polyketide-derived furanocoumarin which is part of the most toxic and carcinogenic compounds among the known mycotoxins. The first step in the biosynthesis of sterigmatocystin is the production of hexanoate by the fatty acid synthase (FAS) units stcJ and stcK. The polyketide backbone is assembled by the non-reducing polyketide synthase stcA by condensation of the starter hexanoyl-CoA and 7 malonyl-CoA extender units followed by cyclization and release of norsolorinic acid. Norsolorinic acid is the first stable intermediate in the biosynthesis of sterigmatocystin and is converted into averantin (AVN) by the ketoreductase stcE which reduces the hexanoate ketone to an alcohol. Averantin is then oxidized into 5'-hydroxyaverantin (HAVN) by the cytochrome P450 monooxygenase stcF. 5'-hydroxyaverantin is further converted to 5'-oxyaverantin (OAVN) by the 5'-hydroxyaverantin dehydrogenase stcG. The next step is the conversion of OAVN into averufin (AVF) which is catalyzed by a yet to be identified enzyme. The cytochrome P450 monooxygenase stcB and the flavin-binding monooxygenase stcW are both required for the conversion of averufin to 1-hydroxyversicolorone. The esterase stcI probably catalyzes the formation of versiconal hemiacetal acetate from 1-hydroxyversicolorone. The oxydoreductase stcN then probably catalyzes the biosynthetic step from versiconal to versicolorin B (VERB). The next step is performed by the versicolorin B desaturase stcL to produce versicolorin A (VERA). The ketoreductase stcU and the cytochrome P450 monooxygenase stcS are involved in the conversion of versicolorin A to demethylsterigmatocystin. The Baeyer-Villiger oxidas stcQ and the reductase stcR might be involved in the biosynthetic step from versicolorin A to demethylsterigmatocystin. The final step in the biosynthesis of sterigmatocystin is the methylation of demethylsterigmatocystin catalyzed by the methyltransferase stcP. The chain is Averufin oxidase stcO from Emericella nidulans (strain FGSC A4 / ATCC 38163 / CBS 112.46 / NRRL 194 / M139) (Aspergillus nidulans).